The primary structure comprises 332 residues: Anthranilate phosphoribosyltransferase (332 aa).

5-phospho-alpha-D-ribose 1-diphosphate contacts are provided by residues glycine 79, 82–83 (GD), threonine 87, 89–92 (NIST), 107–115 (KHGNRSVSS), and serine 119. Position 79 (glycine 79) interacts with anthranilate. Mg(2+) is bound at residue serine 91. Asparagine 110 is a binding site for anthranilate. Arginine 165 is a binding site for anthranilate. Aspartate 223 and glutamate 224 together coordinate Mg(2+).

Belongs to the anthranilate phosphoribosyltransferase family. As to quaternary structure, homodimer. Requires Mg(2+) as cofactor.

It catalyses the reaction N-(5-phospho-beta-D-ribosyl)anthranilate + diphosphate = 5-phospho-alpha-D-ribose 1-diphosphate + anthranilate. It participates in amino-acid biosynthesis; L-tryptophan biosynthesis; L-tryptophan from chorismate: step 2/5. Its function is as follows. Catalyzes the transfer of the phosphoribosyl group of 5-phosphorylribose-1-pyrophosphate (PRPP) to anthranilate to yield N-(5'-phosphoribosyl)-anthranilate (PRA). The chain is Anthranilate phosphoribosyltransferase from Vibrio parahaemolyticus serotype O3:K6 (strain RIMD 2210633).